The primary structure comprises 172 residues: 6,7-dimethyl-8-ribityllumazine synthase (172 aa).

5-amino-6-(D-ribitylamino)uracil-binding positions include F24, 58-60, and 82-84; these read ALE and AVI. 87–88 is a binding site for (2S)-2-hydroxy-3-oxobutyl phosphate; it reads ET. Residue H90 is the Proton donor of the active site. A 5-amino-6-(D-ribitylamino)uracil-binding site is contributed by N115. R129 is a binding site for (2S)-2-hydroxy-3-oxobutyl phosphate. The interval 150–172 is disordered; that stretch reads ALEQLDGDEDDEGEGEDDEEERA. The segment covering 154–172 has biased composition (acidic residues); the sequence is LDGDEDDEGEGEDDEEERA.

The protein belongs to the DMRL synthase family.

The catalysed reaction is (2S)-2-hydroxy-3-oxobutyl phosphate + 5-amino-6-(D-ribitylamino)uracil = 6,7-dimethyl-8-(1-D-ribityl)lumazine + phosphate + 2 H2O + H(+). It functions in the pathway cofactor biosynthesis; riboflavin biosynthesis; riboflavin from 2-hydroxy-3-oxobutyl phosphate and 5-amino-6-(D-ribitylamino)uracil: step 1/2. Catalyzes the formation of 6,7-dimethyl-8-ribityllumazine by condensation of 5-amino-6-(D-ribitylamino)uracil with 3,4-dihydroxy-2-butanone 4-phosphate. This is the penultimate step in the biosynthesis of riboflavin. This Paraburkholderia phymatum (strain DSM 17167 / CIP 108236 / LMG 21445 / STM815) (Burkholderia phymatum) protein is 6,7-dimethyl-8-ribityllumazine synthase.